The primary structure comprises 977 residues: Protein bric-a-brac 1 (977 aa).

The disordered stretch occupies residues Met-1–Ser-97. Polar residues predominate over residues Pro-34–Gln-43. Residues Gln-44 to Gln-69 show a composition bias toward basic and acidic residues. Positions Ser-80 to Ser-97 are enriched in low complexity. Positions Val-127–Gln-192 constitute a BTB domain. Disordered regions lie at residues Ala-221 to Glu-249, Glu-281 to Val-348, Asp-362 to Leu-434, and Ser-447 to Leu-497. The segment covering Glu-316–Asp-330 has biased composition (basic and acidic residues). Low complexity predominate over residues Pro-372–Pro-396. Positions Gly-469–Ser-491 are enriched in gly residues. Positions Phe-559 to Met-611 constitute an HTH psq-type domain. Positions Arg-569–Pro-614 form a DNA-binding region, H-T-H motif. Positions Asp-621–Arg-632 form a DNA-binding region, a.T hook. 2 disordered regions span residues Ala-772 to Leu-900 and Val-925 to Glu-977. Composition is skewed to low complexity over residues Met-804 to Ala-816, Gln-838 to Gln-853, Ala-862 to Ser-872, and Val-925 to Gly-966.

Leg imaginal disk at the central region of the tarsus and in eye antenna disk at the basal cylinder.

It localises to the nucleus. In terms of biological role, probably acts as a transcriptional regulator. Required for the specification of the tarsal segment. Also involved in antenna development. This Drosophila melanogaster (Fruit fly) protein is Protein bric-a-brac 1 (bab1).